A 353-amino-acid chain; its full sequence is Mitochondrial glutathione transporter SLC25A40 (353 aa).

Solcar repeat units follow at residues 14–132 (ITPF…LFAL), 140–224 (RSDL…GKWW), and 234–328 (PTVA…GKAF). The next 6 membrane-spanning stretches (helical) occupy residues 20 to 40 (MMASCSGAIITSLLVTPLDVV), 104 to 124 (LWSGLPPTLIMAVPATVIYFT), 143 to 163 (LAPLFAGAIARVGSATVISPL), 200 to 221 (WGPTLLRDVPFSAMYWFNYEKG), 237 to 257 (AITFTAGALSGSIASIITLPF), and 299 to 319 (GLFAGFMPRLIKVAPACAIMI).

The protein belongs to the mitochondrial carrier (TC 2.A.29) family.

Its subcellular location is the mitochondrion inner membrane. The catalysed reaction is glutathione(in) = glutathione(out). In terms of biological role, probable mitochondrial transporter required for glutathione import into mitochondria. Glutathione, which plays key roles in oxidative metabolism, is produced exclusively in the cytosol and is imported in many organelles. Mitochondrial glutathione is required for the activity and stability of proteins containing iron-sulfur clusters. This is Mitochondrial glutathione transporter SLC25A40 from Danio rerio (Zebrafish).